Reading from the N-terminus, the 331-residue chain is Probable mannose-1-phosphate guanylyltransferase 3 (331 aa).

Diphosphate is bound at residue K3. Residues G66, N90, D92, G127, and N154 each coordinate GDP-alpha-D-mannose.

The protein belongs to the transferase hexapeptide repeat family.

It catalyses the reaction alpha-D-mannose 1-phosphate + GTP + H(+) = GDP-alpha-D-mannose + diphosphate. The protein operates within nucleotide-sugar biosynthesis; GDP-alpha-D-mannose biosynthesis; GDP-alpha-D-mannose from alpha-D-mannose 1-phosphate (GTP route): step 1/1. Its function is as follows. Catalyzes a reaction of the Smirnoff-Wheeler pathway, the major route to ascorbate biosynthesis in plants. This Arabidopsis thaliana (Mouse-ear cress) protein is Probable mannose-1-phosphate guanylyltransferase 3.